Consider the following 665-residue polypeptide: Putative phospholipid:diacylglycerol acyltransferase 2 (665 aa).

Residues 48-68 (LIGYLCTAWWLLLFLYHSVPV) traverse the membrane as a helical segment. The active-site Acyl-ester intermediate is the Ser-237. Active-site charge relay system residues include Asp-567 and His-620.

It belongs to the AB hydrolase superfamily. Lipase family.

It is found in the membrane. It catalyses the reaction a glycerophospholipid + a 1,2-diacyl-sn-glycerol = a monoacylglycerophospholipid + a triacyl-sn-glycerol. The chain is Putative phospholipid:diacylglycerol acyltransferase 2 (PDAT2) from Arabidopsis thaliana (Mouse-ear cress).